We begin with the raw amino-acid sequence, 290 residues long: Arylamine N-acetyltransferase, pineal gland isozyme NAT-10 (290 aa).

Catalysis depends on C68, which acts as the Acyl-thioester intermediate. Residues H107 and D122 contribute to the active site.

It belongs to the arylamine N-acetyltransferase family.

The catalysed reaction is an arylamine + acetyl-CoA = an N-acetylarylamine + CoA. This is Arylamine N-acetyltransferase, pineal gland isozyme NAT-10 from Gallus gallus (Chicken).